Here is a 208-residue protein sequence, read N- to C-terminus: uncharacterized protein (208 aa).

Residues 118–134 (QYPNQYQQQPQQQQPGY) are compositionally biased toward low complexity. The tract at residues 118–208 (QYPNQYQQQP…HKKEKNEIKE (91 aa)) is disordered. Polar residues predominate over residues 138 to 175 (NYNQPPVQLNKQAYDNYQQNDYKSNNQPNLAKENNISN). A compositionally biased stretch (basic residues) spans 187–201 (KKEKKHSFFSKLHKK).

This is an uncharacterized protein from Dictyostelium discoideum (Social amoeba).